We begin with the raw amino-acid sequence, 314 residues long: GMP synthase [glutamine-hydrolyzing] subunit B (314 aa).

A GMPS ATP-PPase domain is found at 2-186; sequence FDPKKFVEEA…LGIPDEIVER (185 aa). 29 to 35 serves as a coordination point for ATP; sequence SGGVDST.

As to quaternary structure, heterodimer composed of a glutamine amidotransferase subunit (A) and a GMP-binding subunit (B).

The catalysed reaction is XMP + L-glutamine + ATP + H2O = GMP + L-glutamate + AMP + diphosphate + 2 H(+). It participates in purine metabolism; GMP biosynthesis; GMP from XMP (L-Gln route): step 1/1. In terms of biological role, catalyzes the synthesis of GMP from XMP. This chain is GMP synthase [glutamine-hydrolyzing] subunit B (guaAB), found in Methanopyrus kandleri (strain AV19 / DSM 6324 / JCM 9639 / NBRC 100938).